The sequence spans 365 residues: Protein RecA (365 aa).

Position 69–76 (69–76) interacts with ATP; it reads GPESSGKT. The interval 344–365 is disordered; it reads LDDNPDTDDHDVEDIDENTDEE. The span at 347–365 shows a compositional bias: acidic residues; the sequence is NPDTDDHDVEDIDENTDEE.

This sequence belongs to the RecA family.

The protein localises to the cytoplasm. Functionally, can catalyze the hydrolysis of ATP in the presence of single-stranded DNA, the ATP-dependent uptake of single-stranded DNA by duplex DNA, and the ATP-dependent hybridization of homologous single-stranded DNAs. It interacts with LexA causing its activation and leading to its autocatalytic cleavage. This is Protein RecA from Arthrospira platensis (Spirulina platensis).